Reading from the N-terminus, the 169-residue chain is Aspartic protease inhibitor 6 (169 aa).

N-linked (GlcNAc...) asparagine glycosylation occurs at Asn-1. 2 disulfides stabilise this stretch: Cys-30-Cys-75 and Cys-124-Cys-134.

The protein belongs to the protease inhibitor I3 (leguminous Kunitz-type inhibitor) family.

Its subcellular location is the vacuole. Its function is as follows. Inhibitor of cathepsin D (aspartic protease). May also inhibit trypsin and chymotrypsin (serine proteases). Protects the plant by inhibiting proteases of invading organisms. The sequence is that of Aspartic protease inhibitor 6 from Solanum tuberosum (Potato).